A 173-amino-acid chain; its full sequence is MLCAKNKKDPKPPPASFSETSKVQNVQNTQPKPAAPSQMSIDESHSKNQKLPSAEKSVEECKKPVSPEKKKSPIKVLSEKKLKSKKKEEDKEPDEKVEKDVKKEVKADNNEPLVKNLKIAKKEQEEENPKTDLESHKDEAEAKKKESRRQKKMRNKNSKEGSVEKMEKSEKAY.

A compositionally biased stretch (basic and acidic residues) spans 1–11; sequence MLCAKNKKDPK. The disordered stretch occupies residues 1–173; that stretch reads MLCAKNKKDP…EKMEKSEKAY (173 aa). The span at 17–41 shows a compositional bias: polar residues; sequence FSETSKVQNVQNTQPKPAAPSQMSI. Composition is skewed to basic and acidic residues over residues 56-109 and 120-144; these read KSVE…KADN and AKKEQEEENPKTDLESHKDEAEAKK. Over residues 145–156 the composition is skewed to basic residues; it reads KESRRQKKMRNK. Residues 157–173 are compositionally biased toward basic and acidic residues; the sequence is NSKEGSVEKMEKSEKAY.

This is an uncharacterized protein from Caenorhabditis elegans.